A 265-amino-acid polypeptide reads, in one-letter code: Isoprenyl transferase (265 aa).

Residue Asp-35 is part of the active site. A Mg(2+)-binding site is contributed by Asp-35. Substrate contacts are provided by residues 36-39 (GNGR), Trp-40, Arg-48, His-52, and 80-82 (STE). Asn-83 serves as the catalytic Proton acceptor. Residues Trp-84, Arg-86, Arg-203, and 209–211 (RIS) contribute to the substrate site. Glu-222 serves as a coordination point for Mg(2+).

The protein belongs to the UPP synthase family. In terms of assembly, homodimer. The cofactor is Mg(2+).

Functionally, catalyzes the condensation of isopentenyl diphosphate (IPP) with allylic pyrophosphates generating different type of terpenoids. The chain is Isoprenyl transferase from Prochlorococcus marinus (strain MIT 9313).